A 335-amino-acid polypeptide reads, in one-letter code: Putative peroxisomal biogenesis factor 19 (335 aa).

2 disordered regions span residues 14–70 (LETQ…LGND) and 104–124 (YNKD…PSEE). 2 stretches are compositionally biased toward low complexity: residues 22 to 55 (PTTT…PSTI) and 109 to 119 (NNNSDDSNNGG).

The protein belongs to the peroxin-19 family.

Its subcellular location is the peroxisome. The sequence is that of Putative peroxisomal biogenesis factor 19 (pex19) from Dictyostelium discoideum (Social amoeba).